A 706-amino-acid polypeptide reads, in one-letter code: DNA ligase (706 aa).

NAD(+)-binding positions include D40–D44, S89–I90, and E120. The N6-AMP-lysine intermediate role is filled by K122. R143, E190, K306, and K330 together coordinate NAD(+). Zn(2+)-binding residues include C424, C427, C442, and C447. The BRCT domain occupies E625 to T706.

The protein belongs to the NAD-dependent DNA ligase family. LigA subfamily. Mg(2+) serves as cofactor. Requires Mn(2+) as cofactor.

The catalysed reaction is NAD(+) + (deoxyribonucleotide)n-3'-hydroxyl + 5'-phospho-(deoxyribonucleotide)m = (deoxyribonucleotide)n+m + AMP + beta-nicotinamide D-nucleotide.. Functionally, DNA ligase that catalyzes the formation of phosphodiester linkages between 5'-phosphoryl and 3'-hydroxyl groups in double-stranded DNA using NAD as a coenzyme and as the energy source for the reaction. It is essential for DNA replication and repair of damaged DNA. This is DNA ligase from Rhodopirellula baltica (strain DSM 10527 / NCIMB 13988 / SH1).